A 329-amino-acid polypeptide reads, in one-letter code: Adenylate isopentenyltransferase (329 aa).

ATP is bound by residues 37-44 (GATGTGKS), lysine 63, threonine 74, 129-131 (SNS), 220-222 (KAI), and lysine 313.

The protein belongs to the IPP transferase family. Mg(2+) serves as cofactor. As to expression, expressed in roots, stems, leaves and cones.

The catalysed reaction is dimethylallyl diphosphate + AMP = N(6)-(dimethylallyl)adenosine 5'-phosphate + diphosphate. The enzyme catalyses dimethylallyl diphosphate + ADP = N(6)-(dimethylallyl)adenosine 5'-diphosphate + diphosphate. It catalyses the reaction dimethylallyl diphosphate + ATP = N(6)-(dimethylallyl)adenosine 5'-triphosphate + diphosphate. In terms of biological role, involved in cytokinin biosynthesis. Catalyzes the transfer of an isopentenyl group from dimethylallyl diphosphate (DMAPP) to ATP, ADP and AMP. GMP, IMP, CMP or UMP are not used as substrates. This Humulus lupulus (European hop) protein is Adenylate isopentenyltransferase.